The following is a 574-amino-acid chain: Glucose-6-phosphate 1-dehydrogenase, chloroplastic (574 aa).

NADP(+) is bound by residues 93–100 (GASGDLAK) and arginine 127. The cysteines at positions 145 and 153 are disulfide-linked. Lysine 230 is an NADP(+) binding site. Residues lysine 230, 260 to 264 (HYLGK), glutamate 298, and aspartate 317 each bind D-glucose 6-phosphate. The active-site Proton acceptor is histidine 322. Residue lysine 415 coordinates NADP(+). Lysine 418 and lysine 423 together coordinate D-glucose 6-phosphate. Arginine 424, arginine 428, and arginine 457 together coordinate NADP(+). Position 459 (glutamine 459) interacts with D-glucose 6-phosphate. NADP(+) contacts are provided by residues 465–467 (YLK) and arginine 550.

This sequence belongs to the glucose-6-phosphate dehydrogenase family. As to quaternary structure, homodimer.

It localises to the plastid. It is found in the chloroplast. The enzyme catalyses D-glucose 6-phosphate + NADP(+) = 6-phospho-D-glucono-1,5-lactone + NADPH + H(+). It functions in the pathway carbohydrate degradation; pentose phosphate pathway; D-ribulose 5-phosphate from D-glucose 6-phosphate (oxidative stage): step 1/3. Regulated by metabolites. Post-translationally inactivated by cysteine-mediated redox modification via the ferredoxin-thioredoxin system in the light and this avoids futile cycles with photosynthetic CO2 fixation. Its function is as follows. Catalyzes the rate-limiting step of the oxidative pentose-phosphate pathway, which represents a route for the dissimilation of carbohydrates besides glycolysis. The main function of this enzyme is to provide reducing power (NADPH) and pentose phosphates for fatty acid and nucleic acid synthesis which are involved in membrane synthesis and cell division. This Spinacia oleracea (Spinach) protein is Glucose-6-phosphate 1-dehydrogenase, chloroplastic (G6PD).